Consider the following 114-residue polypeptide: Ribosome-binding factor A (114 aa).

This sequence belongs to the RbfA family. As to quaternary structure, monomer. Binds 30S ribosomal subunits, but not 50S ribosomal subunits or 70S ribosomes.

It is found in the cytoplasm. Its function is as follows. One of several proteins that assist in the late maturation steps of the functional core of the 30S ribosomal subunit. Associates with free 30S ribosomal subunits (but not with 30S subunits that are part of 70S ribosomes or polysomes). Required for efficient processing of 16S rRNA. May interact with the 5'-terminal helix region of 16S rRNA. The sequence is that of Ribosome-binding factor A from Listeria innocua serovar 6a (strain ATCC BAA-680 / CLIP 11262).